A 314-amino-acid polypeptide reads, in one-letter code: Taste receptor type 2 member 42 (314 aa).

At 1 to 7 (MATELDK) the chain is on the extracellular side. Residues 8–28 (IFLILAIAEFIISMLGNVFIG) traverse the membrane as a helical segment. At 29 to 50 (LVNCSEGIKNQKVFSADFILTC) the chain is on the cytoplasmic side. Residues 51–71 (LAISTIGQLLVILFDSFLVGL) form a helical membrane-spanning segment. Over 72–101 (ASHLYTTYRLGKTVIMLWHMTNHLTTWLAT) the chain is Extracellular. A helical membrane pass occupies residues 102–122 (CLSIFYFFKIAHFPHSLFLWL). Residues 123–127 (RWRMN) lie on the Cytoplasmic side of the membrane. The chain crosses the membrane as a helical span at residues 128 to 148 (GMIVMLLILSLFLLIFDSLVL). At 149 to 187 (EIFIDISLNIIDKSNLTLYLDESKTLYDKLSILKTLLSL) the chain is on the extracellular side. N-linked (GlcNAc...) asparagine glycosylation is present at N163. Residues 188–208 (TSFIPFSLFLTSLLFLFLSLV) form a helical membrane-spanning segment. At 209–238 (RHTRNLKLSSLGSRDSSTEAHRRAMKMVMS) the chain is on the cytoplasmic side. Residues 239–259 (FLFLFIVHFFSLQVANWIFFM) traverse the membrane as a helical segment. The Extracellular segment spans residues 260–265 (LWNNKC). Residues 266-286 (IKFVMLALNAFPSCHSFILIL) form a helical membrane-spanning segment. Over 287 to 314 (GNSKLQQTAVRLLWHLRNYTKTPNPLPL) the chain is Cytoplasmic.

It belongs to the G-protein coupled receptor T2R family.

The protein localises to the membrane. Functionally, receptor that may play a role in the perception of bitterness and is gustducin-linked. May play a role in sensing the chemical composition of the gastrointestinal content. The activity of this receptor may stimulate alpha gustducin, mediate PLC-beta-2 activation and lead to the gating of TRPM5. This is Taste receptor type 2 member 42 (TAS2R42) from Homo sapiens (Human).